The chain runs to 369 residues: DNA replication and repair protein RecF (369 aa).

Residue 30–37 coordinates ATP; sequence GDNAQGKT.

Belongs to the RecF family.

It localises to the cytoplasm. Functionally, the RecF protein is involved in DNA metabolism; it is required for DNA replication and normal SOS inducibility. RecF binds preferentially to single-stranded, linear DNA. It also seems to bind ATP. In Streptococcus equi subsp. zooepidemicus (strain H70), this protein is DNA replication and repair protein RecF.